The following is a 642-amino-acid chain: Mediator of RNA polymerase II transcription subunit 17 (642 aa).

Positions A210–N232 are disordered. The segment covering S220–N232 has biased composition (low complexity).

Belongs to the Mediator complex subunit 17 family. As to quaternary structure, component of the Mediator complex, which includes at least CDK8, MED4, MED6, MED11, MED14, MED17, MED18, MED20, MED21, MED22, MED27, MED28, MED30 and MED31. Interacts with Hsf.

It localises to the nucleus. The protein localises to the chromosome. Component of the Mediator complex, a coactivator involved in the regulated transcription of nearly all RNA polymerase II-dependent genes. Mediator functions as a bridge to convey information from gene-specific regulatory proteins to the basal RNA polymerase II transcription machinery. Mediator is recruited to promoters by direct interactions with regulatory proteins and serves as a scaffold for the assembly of a functional preinitiation complex with RNA polymerase II and the general transcription factors. Required for activated transcription of the MtnA, MtnB and MtnD genes. Negatively regulates sex comb development. This chain is Mediator of RNA polymerase II transcription subunit 17 (MED17), found in Drosophila melanogaster (Fruit fly).